A 423-amino-acid polypeptide reads, in one-letter code: Glucose-1-phosphate adenylyltransferase (423 aa).

Residues Y107, G172, 187 to 188 (EK), and S205 contribute to the alpha-D-glucose 1-phosphate site.

Belongs to the bacterial/plant glucose-1-phosphate adenylyltransferase family. As to quaternary structure, homotetramer.

It catalyses the reaction alpha-D-glucose 1-phosphate + ATP + H(+) = ADP-alpha-D-glucose + diphosphate. It functions in the pathway glycan biosynthesis; glycogen biosynthesis. Its function is as follows. Involved in the biosynthesis of ADP-glucose, a building block required for the elongation reactions to produce glycogen. Catalyzes the reaction between ATP and alpha-D-glucose 1-phosphate (G1P) to produce pyrophosphate and ADP-Glc. The polypeptide is Glucose-1-phosphate adenylyltransferase (Albidiferax ferrireducens (strain ATCC BAA-621 / DSM 15236 / T118) (Rhodoferax ferrireducens)).